The chain runs to 592 residues: Frizzled-1 (592 aa).

Residues 1 to 26 are disordered; sequence MAERRGPAGGGSGEVGGGRRAGGDRC. An N-terminal signal peptide occupies residues 1–48; sequence MAERRGPAGGGSGEVGGGRRAGGDRCPRRPPALPLLLLLWAAALPAGG. Gly residues predominate over residues 7 to 20; the sequence is PAGGGSGEVGGGRR. Residues 49 to 271 are Extracellular-facing; that stretch reads QPAAQPAALS…PEELRFSRTW (223 aa). The FZ domain maps to 65–184; sequence PDHGYCQPIS…HGAGELCVGQ (120 aa). 5 cysteine pairs are disulfide-bonded: C70–C131, C78–C124, C115–C152, C141–C181, and C145–C169. A glycan (N-linked (GlcNAc...) asparagine) is linked at N84. N185 is a glycosylation site (N-linked (GlcNAc...) asparagine). Positions 185 to 219 are disordered; sequence NASERGTPTPALRPESWTSNPHRGGGAGGSGPGEA. Residues 207 to 218 are compositionally biased toward gly residues; the sequence is RGGGAGGSGPGE. A helical transmembrane segment spans residues 272–292; it reads IGIWSVLCCASTLFTVLTYLV. Residues 293 to 303 are Cytoplasmic-facing; the sequence is DMKRFSYPERP. A helical transmembrane segment spans residues 304-324; sequence IIFLSGCYTAVAVAYIAGFLL. Over 325–351 the chain is Extracellular; the sequence is EERVVCNERFAEDGSRTVAQGTKREGC. A helical transmembrane segment spans residues 352–372; that stretch reads TILFMMLYFFGMASSIWWVIL. Over 373-394 the chain is Cytoplasmic; that stretch reads SLTWFLAAGMKWGHEAIEANSQ. A helical transmembrane segment spans residues 395 to 415; sequence YFHLAAWAVPAIKTITILALG. The Extracellular segment spans residues 416 to 438; that stretch reads QVDGDVLSGVCFVGINNVDALRG. Residues 439–459 traverse the membrane as a helical segment; sequence FVLAPLFVYLFIGTSFLLAGF. Residues 460-485 are Cytoplasmic-facing; sequence VSLFRIRTIMKHDGTKTEKLEKLMVR. Residues 486-506 traverse the membrane as a helical segment; sequence IGIFSVLYTVPATIVIACYFY. The Extracellular portion of the chain corresponds to 507–546; the sequence is EQAFREQWERSWVTQSCKSYAIPCPNNHSSHHPPMSPDFT. N-linked (GlcNAc...) asparagine glycosylation occurs at N533. A helical membrane pass occupies residues 547-567; that stretch reads VFMIKYLMTLIVGITSGFWIW. The Cytoplasmic segment spans residues 568-592; it reads SGKTLNSWRKFYTRLTNSKQGETTV. The Lys-Thr-X-X-X-Trp motif, mediates interaction with the PDZ domain of Dvl family members signature appears at 570-575; sequence KTLNSW. The PDZ-binding signature appears at 590–592; sequence TTV.

The protein belongs to the G-protein coupled receptor Fz/Smo family. In terms of tissue distribution, expressed in the lens, otic placode (medial wall of the vesicle) and in epibranchial placode. Also expressed in the developing somites (dermomyotome).

It is found in the cell membrane. Receptor for Wnt proteins. Functions in the canonical Wnt/beta-catenin signaling pathway. The canonical Wnt/beta-catenin signaling pathway leads to the activation of disheveled proteins, inhibition of GSK-3 kinase, nuclear accumulation of beta-catenin and activation of Wnt target genes. A second signaling pathway involving PKC and calcium fluxes has been seen for some family members, but it is not yet clear if it represents a distinct pathway or if it can be integrated in the canonical pathway, as PKC seems to be required for Wnt-mediated inactivation of GSK-3 kinase. Both pathways seem to involve interactions with G-proteins. May be involved in transduction and intercellular transmission of polarity information during tissue morphogenesis and/or in differentiated tissues. This is Frizzled-1 (FZD1) from Gallus gallus (Chicken).